We begin with the raw amino-acid sequence, 327 residues long: GTPase Obg (327 aa).

Positions M1 to L159 constitute an Obg domain. Positions A160–I327 constitute an OBG-type G domain. ATP is bound by residues G166–S173, F191–I195, D213–G216, N280–E283, and S309–S311. The Mg(2+) site is built by S173 and T193.

It belongs to the TRAFAC class OBG-HflX-like GTPase superfamily. OBG GTPase family. As to quaternary structure, monomer. Mg(2+) serves as cofactor.

The protein localises to the cytoplasm. In terms of biological role, an essential GTPase which binds GTP, GDP and possibly (p)ppGpp with moderate affinity, with high nucleotide exchange rates and a fairly low GTP hydrolysis rate. Plays a role in control of the cell cycle, stress response, ribosome biogenesis and in those bacteria that undergo differentiation, in morphogenesis control. The sequence is that of GTPase Obg from Prochlorococcus marinus (strain MIT 9215).